Reading from the N-terminus, the 485-residue chain is MRISIILLSLLFLSLHSLIKADITKLSVCGSARAVPTATQNPKPTCVNVNSQGIPTAGLNSAAFDNGVRCGQCYELTGPLGKTVVMVADVCDAGSACTQSDLFNFIIPNEEFDKIGNRSDYGNIFSLCYQIVSCGYSGNVQGVFTGPSSSPNTFTYFLSVVFSNNNVAIKKVLIKGLSWPLYESLTGQNGNWKWNKNSYELQFPATLYITSNTGETITYKMNSRPITNQPIDLDFQFNPKAISSLENNECSMALLPQYIYQDGLSYGWVDSQSFNYAKFTDKSSDTKSGSGTCINAQLDGHGGVKFTREGDFQTSYLDKLSFDIKTSADSSSFAVYFGDVATKNIDPLVASTWTTVELSVKSLTNNTVEGSITFFNNQADPINIWLDNIKWTYTDDAPLDQPTMDLIEVNNKPSTTSGTGTTSSKPSSSSGGVSGGGIGSESSIYGLSSENQENQSGHHASSNTNILLPTTFVFFISITILSLLF.

A signal peptide spans 1–21 (MRISIILLSLLFLSLHSLIKA). Residues 22–464 (DITKLSVCGS…QSGHHASSNT (443 aa)) are Extracellular-facing. An Expansin-like EG45 domain is found at 26-139 (LSVCGSARAV…QIVSCGYSGN (114 aa)). 2 disulfides stabilise this stretch: cysteine 29–cysteine 70 and cysteine 73–cysteine 134. 2 N-linked (GlcNAc...) asparagine glycosylation sites follow: asparagine 117 and asparagine 365. A disordered region spans residues 408-436 (EVNNKPSTTSGTGTTSSKPSSSSGGVSGG). Over residues 414–431 (STTSGTGTTSSKPSSSSG) the composition is skewed to low complexity. N-linked (GlcNAc...) asparagine glycosylation is present at asparagine 454. The helical transmembrane segment at 465–485 (NILLPTTFVFFISITILSLLF) threads the bilayer.

The protein belongs to the expansin family. Expansin A subfamily.

The protein resides in the membrane. Functionally, may serve to lubricate the movement of the cellulose microfibrils during cell growth and wall extension and/or may serve to maintain the fluid state of the slug cell wall. The protein is Expansin-like protein 8 (expl8) of Dictyostelium discoideum (Social amoeba).